The chain runs to 316 residues: Leucine-rich repeat-containing protein 73 (316 aa).

7 LRR repeats span residues 57–78, 86–106, 114–137, 145–166, 174–187, 202–223, and 231–250; these read SLAQLNLNLGVVSSPSRIKQLA, SIQSLFLHGSPLTDAGLALLN, ALVALDLGDCMLGDEAINLICGLL, GLKELTLSANPGITPKGWSRLA, QVRVLNLDYNPLGD, TLEVLDLEGTGLTNQSAQTLLD, and ALRSLVLAENSISPELQQQI. A disordered region spans residues 257-296; it reads GEEEEEVAGGAGDTQEWERGREPAAHQRGSSSWMCPSDPS. Positions 272-281 are enriched in basic and acidic residues; sequence EWERGREPAA. Low complexity predominate over residues 286–296; sequence SSSWMCPSDPS.

The protein is Leucine-rich repeat-containing protein 73 (LRRC73) of Homo sapiens (Human).